Reading from the N-terminus, the 519-residue chain is Membrane-bound glycerophospholipid O-acyltransferase 2 (519 aa).

A run of 6 helical transmembrane segments spans residues 22–42 (PIDQVNFVVCQLFALLAAVWF), 61–81 (TLLGLYLAFFCFGWYALHFLV), 88–108 (CIMIIAGVESMHQCCFVFALG), 184–204 (FMGILAGPLCSYKDYIAFIEG), 236–256 (LLVCGLSLLFHLTISSMLPVE), and 288–305 (YFAWTLADAINNAAGFGF). Residues N341 and H372 contribute to the active site. The next 3 helical transmembrane spans lie at 365 to 385 (FFLSAIWHGVYPGYYLTFLTG), 415 to 435 (IITWAATQITISYTVVPFVLL), and 443 to 463 (FYRSWYYCLHICSILVLLLLP).

This sequence belongs to the membrane-bound acyltransferase family.

The protein resides in the endoplasmic reticulum membrane. It carries out the reaction a 1-acyl-sn-glycero-3-phosphocholine + an acyl-CoA = a 1,2-diacyl-sn-glycero-3-phosphocholine + CoA. It catalyses the reaction a 1-acyl-sn-glycero-3-phosphoethanolamine + an acyl-CoA = a 1,2-diacyl-sn-glycero-3-phosphoethanolamine + CoA. The catalysed reaction is a 1-acyl-sn-glycero-3-phosphate + an acyl-CoA = a 1,2-diacyl-sn-glycero-3-phosphate + CoA. The enzyme catalyses (9Z)-hexadecenoyl-CoA + 1-hexadecanoyl-sn-glycero-3-phosphocholine = 1-hexadecanoyl-2-(9Z-hexadecenoyl)-sn-glycero-3-phosphocholine + CoA. It carries out the reaction 1-hexadecanoyl-sn-glycero-3-phosphoethanolamine + (9Z)-octadecenoyl-CoA = 1-hexadecanoyl-2-(9Z-octadecenoyl)-sn-glycero-3-phosphoethanolamine + CoA. It catalyses the reaction 1-hexadecanoyl-sn-glycero-3-phosphoethanolamine + (9Z)-hexadecenoyl-CoA = 1-hexadecanoyl-2-(9Z)-hexadecenoyl-sn-glycero-3-phosphoethanolamine + CoA. The catalysed reaction is 1-(9Z-octadecenoyl)-sn-glycero-3-phospho-L-serine + hexadecanoyl-CoA = 1-(9Z)-octadecenoyl-2-hexadecanoyl-sn-glycero-3-phosphoserine + CoA. The enzyme catalyses (9Z,12Z)-octadecadienoyl-CoA + 1-hexadecanoyl-sn-glycero-3-phosphocholine = 1-hexadecanoyl-2-(9Z,12Z-octadecadienoyl)-sn-glycero-3-phosphocholine + CoA. It carries out the reaction 1-hexadecanoyl-sn-glycero-3-phosphocholine + (9Z)-octadecenoyl-CoA = 1-hexadecanoyl-2-(9Z-octadecenoyl)-sn-glycero-3-phosphocholine + CoA. It catalyses the reaction 1-hexadecanoyl-sn-glycero-3-phosphate + (9Z)-hexadecenoyl-CoA = 1-hexadecanoyl-2-[(9Z)-hexadec-9-enoyl]-sn-glycero-3-phosphate + CoA. The catalysed reaction is 1-hexadecanoyl-sn-glycero-3-phosphate + (9Z)-octadecenoyl-CoA = 1-hexadecanoyl-2-(9Z-octadecenoyl)-sn-glycero-3-phosphate + CoA. The enzyme catalyses a 1-O-(1Z-alkenyl)-sn-glycero-3-phosphocholine + (9Z)-octadecenoyl-CoA = 1-O-(1Z)-alkenyl-2-(9Z)-octadecenoyl-sn-glycero-3-phosphocholine + CoA. It carries out the reaction a 1-O-(1Z-alkenyl)-sn-glycero-3-phosphoethanolamine + (9Z)-octadecenoyl-CoA = 1-O-(1Z)-alkenyl-2-(9Z)-octadecenoyl-sn-glycero-3-phosphoethanolamine + CoA. It catalyses the reaction 1-octadecanoyl-sn-glycero-3-phosphoethanolamine + (9Z)-octadecenoyl-CoA = 1-octadecanoyl-2-(9Z-octadecenoyl)-sn-glycero-3-phosphoethanolamine + CoA. The catalysed reaction is 1-octadecanoyl-sn-glycero-3-phosphocholine + (9Z)-octadecenoyl-CoA = 1-octadecanoyl-2-(9Z-octadecenoyl)-sn-glycero-3-phosphocholine + CoA. The enzyme catalyses 1-(9Z-octadecenoyl)-sn-glycero-3-phosphoethanolamine + (9Z)-octadecenoyl-CoA = 1,2-di-(9Z-octadecenoyl)-sn-glycero-3-phosphoethanolamine + CoA. The protein operates within lipid metabolism; phospholipid metabolism. Its activity is regulated as follows. Partially inhibited by thimerosal. Functionally, acyltransferase which catalyzes the transfer of an acyl group from an acyl-CoA to a lysophospholipid leading to the production of a phospholipid and participates in the reacylation step of the phospholipid remodeling pathway also known as the Lands cycle. May catalyze preferentially the acylation of lysophosphatidylethanolamine (1-acyl-sn-glycero-3-phosphoethanolamine or LPE) and lysophosphatidic acid (LPA) and to a lesser extend lysophosphatidylcholine (LPC) and lysophosphatidylserine (LPS). Prefers oleoyl-CoA as the acyl donor. May be involved in chondrocyte differentiation. The chain is Membrane-bound glycerophospholipid O-acyltransferase 2 from Rattus norvegicus (Rat).